We begin with the raw amino-acid sequence, 336 residues long: MSEYITLSLDEVCALSYQVLTRHGLSDAHARAIAEVITQGQRDECHSHGVYRLLGCVRSVREGRIDPRAEPSLRHVSPGVLEVDAHYGYSLLGFHTGLPILAEKARSQGIAAMVIKRCFHFSALWPEVEAIADYGLVGMAMNPSHSWVAPAGGRQPVFGTNPLAFAWPRPGGQPFVFDFATSAIARGDIELHARQGKPIPEHWAIDADGQPTTDAKAALQGAMQTFGGHKGSALAAMIELLAGALIGDLTSAESMAFDGGVGATPCHGELVLAFDPRVFLGEGYEQGLERAEGLFAAIARQGARLPSQRRFAARARSLEHGVQIPRGLLEDIRGLL.

Residue S47 is the Charge relay system of the active site. H48 functions as the Proton donor in the catalytic mechanism. Substrate is bound at residue R52. 120–124 (HFSAL) is a binding site for NADP(+). T160 lines the substrate pocket. 178-180 (DFA) lines the NADP(+) pocket. Residue 186-187 (RG) participates in substrate binding. Residue D188 is the Charge relay system of the active site. NADP(+) contacts are provided by residues 229–230 (HK) and 304–310 (RLPSQRR).

This sequence belongs to the LDH2/MDH2 oxidoreductase family. In terms of assembly, homodimer.

The catalysed reaction is L-proline + NAD(+) = 1-pyrroline-2-carboxylate + NADH + H(+). It catalyses the reaction L-proline + NADP(+) = 1-pyrroline-2-carboxylate + NADPH + H(+). In terms of biological role, catalyzes the reduction of Delta(1)-pyrroline-2-carboxylate (Pyr2C) to L-proline, using NADPH as the electron donor. May be involved in a degradation pathway that converts trans-3-hydroxy-L-proline (t3LHyp) to L-proline. This chain is Delta(1)-pyrroline-2-carboxylate reductase, found in Pseudomonas fluorescens (strain ATCC BAA-477 / NRRL B-23932 / Pf-5).